Consider the following 531-residue polypeptide: MELASTMSVAMALAAAIFVVLCSVVASARGRREKALKLPPGPRGWPVLGSLGALAGALPPHRALAALAARHGPLMHLRLGSYHTVVASSADAARLVLRTHDSALADRPDTAAGEITSYGYLGIVHTPRGAYWRMARRLCATELFSARRVESFQDVRAQEMRALARGLFGCAAGRRAVAVREHVAGATMRNILRMAVGEKWSGCYGSPEGEAFRRSLDEAFAATGAVSNVGEWVPWLGWLDVQGFKRKMKRLHDLHDHFYEKILVDHEERRRLAQASGGEFVATDLVDVLLQLSEESTKLESESEARLPRDGVKALIQDIIAGGTESSAVTIEWAMAELLRHPEAMAKATDELDRVVGSGRWVAERDLPELHYIDAVVKETLRLHPVGPLLVPHYARERTVVAGYDVPAGARVLVNAWAIARDPASWPDAPDAFQPERFLGAAAAVDVRGAHFELLPFGSGRRICPAYDLAMKLVAAGVANLVHGFAWRLPDGVAAEDVSMEEHVGLSTRRKVPLFAVAEPRLPVHLYSATE.

A helical membrane pass occupies residues 6–26 (TMSVAMALAAAIFVVLCSVVA). C464 is a heme binding site.

Belongs to the cytochrome P450 family. Heme is required as a cofactor.

It is found in the membrane. The catalysed reaction is (6E,10E)-geranyllinalool + reduced [NADPH--hemoprotein reductase] + O2 = (3E,7E)-4,8,12-trimethyltrideca 1,3,7,11-tetraene + but-3-en-2-one + oxidized [NADPH--hemoprotein reductase] + 2 H2O + H(+). The enzyme catalyses (3S,6E)-nerolidol + reduced [NADPH--hemoprotein reductase] + O2 = (3E)-4,8-dimethylnona-1,3,7-triene + but-3-en-2-one + oxidized [NADPH--hemoprotein reductase] + 2 H2O + H(+). Its pathway is secondary metabolite biosynthesis; terpenoid biosynthesis. Involved in the biosynthesis of homoterpenes, attractants of herbivores parasitoids and predators (e.g. predatory mites and parasitoid wasps). Component of the volatile terpenes biosynthesis pathways. Converts mainly nerolidol to dimethylnonatriene (DMNT) and, to a lower extent, geranyllinalool to trimethyltridecatetraene (TMTT). The sequence is that of Dimethylnonatriene synthase from Zea mays (Maize).